The chain runs to 441 residues: Glutamate--tRNA ligase 1 (441 aa).

A 'HIGH' region motif is present at residues 8–18 (PSPTGYIHIGN). The 'KMSKS' region signature appears at 239–243 (ALSKR). Lys242 is an ATP binding site.

This sequence belongs to the class-I aminoacyl-tRNA synthetase family. Glutamate--tRNA ligase type 1 subfamily. As to quaternary structure, monomer.

The protein resides in the cytoplasm. The catalysed reaction is tRNA(Glu) + L-glutamate + ATP = L-glutamyl-tRNA(Glu) + AMP + diphosphate. Functionally, catalyzes the attachment of glutamate to tRNA(Glu) in a two-step reaction: glutamate is first activated by ATP to form Glu-AMP and then transferred to the acceptor end of tRNA(Glu). This is Glutamate--tRNA ligase 1 from Roseobacter denitrificans (strain ATCC 33942 / OCh 114) (Erythrobacter sp. (strain OCh 114)).